Reading from the N-terminus, the 62-residue chain is uncharacterized protein (62 aa).

Positions 26 to 62 form a coiled coil; that stretch reads YELATLYEAMQKENEEQIEQSKNKLERLRKEWIRLNG.

This is an uncharacterized protein from Bacillus subtilis (strain 168).